A 331-amino-acid chain; its full sequence is Adenosine deaminase (331 aa).

Zn(2+) contacts are provided by His-12 and His-14. Substrate-binding residues include His-14, Asp-16, and Gly-170. A Zn(2+)-binding site is contributed by His-197. Glu-200 acts as the Proton donor in catalysis. Asp-278 provides a ligand contact to Zn(2+). Asp-279 lines the substrate pocket.

The protein belongs to the metallo-dependent hydrolases superfamily. Adenosine and AMP deaminases family. Adenosine deaminase subfamily. Requires Zn(2+) as cofactor.

It catalyses the reaction adenosine + H2O + H(+) = inosine + NH4(+). The enzyme catalyses 2'-deoxyadenosine + H2O + H(+) = 2'-deoxyinosine + NH4(+). In terms of biological role, catalyzes the hydrolytic deamination of adenosine and 2-deoxyadenosine. The sequence is that of Adenosine deaminase from Shewanella denitrificans (strain OS217 / ATCC BAA-1090 / DSM 15013).